A 65-amino-acid polypeptide reads, in one-letter code: Temporin-LK1 (65 aa).

The N-terminal stretch at 1–22 (MFTMKKSLLLLFFLGAINLPLC) is a signal peptide. The propeptide occupies 23–44 (QEERNAEEERRDGDDEGSVEVQ). The residue at position 63 (Phe-63) is a Phenylalanine amide.

In terms of tissue distribution, expressed by the skin glands.

It localises to the secreted. Has antimicrobial activity against Gram-positive bacteria S.aureus ATCC 2592 (MIC=2.5 uM), S.aureus ATCC 43300 (MIC=2.5 uM) and B.subtilis (MIC=15.0 uM), against Gram-negative bacteria E.coli ML-35P (MIC=30.0 uM), P.aeruginosa PA01 (MIC=2.5 uM) and P.aeruginosa ATCC 27853 (MIC=2.5 uM) and against fungus C.albicans ATCC 2002 (MIC=5.0 uM). This chain is Temporin-LK1, found in Limnonectes kuhlii (Kuhl's Creek frog).